A 44-amino-acid chain; its full sequence is Antibacterial protein 2 homolog (44 aa).

It belongs to the staphylococcal hemolytic protein family.

The protein localises to the secreted. In terms of biological role, has hemolytic activity and also inhibits the growth of gonococci. This chain is Antibacterial protein 2 homolog, found in Staphylococcus haemolyticus (strain JCSC1435).